The chain runs to 187 residues: Interferon alpha-1/2 (187 aa).

Positions 1–23 (MALPCSFSVALVLLSCHSLCCLA) are cleaved as a signal peptide. Intrachain disulfides connect Cys24–Cys122 and Cys52–Cys160. The N-linked (GlcNAc...) asparagine glycan is linked to Asn101.

The protein belongs to the alpha/beta interferon family.

It is found in the secreted. Functionally, produced by macrophages, IFN-alpha have antiviral activities. Interferon stimulates the production of two enzymes: a protein kinase and an oligoadenylate synthetase. The chain is Interferon alpha-1/2 from Canis lupus familiaris (Dog).